Here is a 670-residue protein sequence, read N- to C-terminus: Thrombospondin-type laminin G domain and EAR repeat-containing protein (670 aa).

A signal peptide spans 1–20 (MSALLMLCAVLLLLGTPSRG). A Laminin G-like domain is found at 59 to 278 (GLQFSATEPR…KVTLGSRPPC (220 aa)). EAR repeat units follow at residues 314 to 359 (DYVE…KWTD), 361 to 409 (KFVS…KWSP), 413 to 461 (KFTL…RWNP), 465 to 513 (LFEA…IWLV), 515 to 571 (AFQL…ELNI), 575 to 623 (TFVK…RWQG), and 626 to 669 (GFVA…KLRT). Asparagine 498 carries an N-linked (GlcNAc...) asparagine glycan.

In the organ of Corti, expression at postnatal day 1 (P1) is restricted to the basal region of the stereocilia of inner and outer hair cells (at protein level). Expressed in the organ of Corti at P1 and P7, in cochlear ganglion, stria vascularis and vestibular ends at P7, and in inferior colliculus, remaining brainstem, cerebellum, brain hemispheres and retina at P1, P7 and in the adult. Also detected in adult liver, lung, kidney, intestine and testis but not in heart or skeletal muscle.

It is found in the secreted. The protein localises to the cell surface. It localises to the cell projection. The protein resides in the stereocilium. In terms of biological role, plays a critical role in tooth and hair follicle morphogenesis through regulation of the Notch signaling pathway. May play a role in development or function of the auditory system. In Mus musculus (Mouse), this protein is Thrombospondin-type laminin G domain and EAR repeat-containing protein.